The chain runs to 446 residues: Na(+)-translocating NADH-quinone reductase subunit A (446 aa).

It belongs to the NqrA family. Composed of six subunits; NqrA, NqrB, NqrC, NqrD, NqrE and NqrF.

The enzyme catalyses a ubiquinone + n Na(+)(in) + NADH + H(+) = a ubiquinol + n Na(+)(out) + NAD(+). Its function is as follows. NQR complex catalyzes the reduction of ubiquinone-1 to ubiquinol by two successive reactions, coupled with the transport of Na(+) ions from the cytoplasm to the periplasm. NqrA to NqrE are probably involved in the second step, the conversion of ubisemiquinone to ubiquinol. This chain is Na(+)-translocating NADH-quinone reductase subunit A, found in Psychromonas ingrahamii (strain DSM 17664 / CCUG 51855 / 37).